Consider the following 150-residue polypeptide: Ribonuclease H (150 aa).

One can recognise an RNase H type-1 domain in the interval 3–144 (DKDMIEIWTD…ADGLARKGTD (142 aa)). The Mg(2+) site is built by Asp-12, Glu-50, Asp-72, and Asp-136. Residues 129 to 150 (DEGNERADGLARKGTDEVRGRK) form a disordered region.

This sequence belongs to the RNase H family. As to quaternary structure, monomer. Mg(2+) is required as a cofactor.

The protein localises to the cytoplasm. It catalyses the reaction Endonucleolytic cleavage to 5'-phosphomonoester.. In terms of biological role, endonuclease that specifically degrades the RNA of RNA-DNA hybrids. The sequence is that of Ribonuclease H from Hyphomonas neptunium (strain ATCC 15444).